Reading from the N-terminus, the 753-residue chain is 5-methyltetrahydropteroyltriglutamate--homocysteine methyltransferase (753 aa).

Residues 17 to 20 (RELK) and lysine 117 contribute to the 5-methyltetrahydropteroyltri-L-glutamate site. Residues 431–433 (IGS) and glutamate 484 contribute to the L-homocysteine site. L-methionine contacts are provided by residues 431 to 433 (IGS) and glutamate 484. 5-methyltetrahydropteroyltri-L-glutamate-binding positions include 515-516 (RC) and tryptophan 561. Aspartate 599 is an L-homocysteine binding site. L-methionine is bound at residue aspartate 599. Glutamate 605 is a 5-methyltetrahydropteroyltri-L-glutamate binding site. Zn(2+)-binding residues include histidine 641, cysteine 643, and glutamate 665. The active-site Proton donor is the histidine 694. Residue cysteine 726 coordinates Zn(2+).

It belongs to the vitamin-B12 independent methionine synthase family. Zn(2+) is required as a cofactor.

The enzyme catalyses 5-methyltetrahydropteroyltri-L-glutamate + L-homocysteine = tetrahydropteroyltri-L-glutamate + L-methionine. Its pathway is amino-acid biosynthesis; L-methionine biosynthesis via de novo pathway; L-methionine from L-homocysteine (MetE route): step 1/1. In terms of biological role, catalyzes the transfer of a methyl group from 5-methyltetrahydrofolate to homocysteine resulting in methionine formation. The sequence is that of 5-methyltetrahydropteroyltriglutamate--homocysteine methyltransferase from Escherichia coli O157:H7.